Reading from the N-terminus, the 480-residue chain is Zinc finger protein ztf-16 (480 aa).

The C2H2-type 1 zinc-finger motif lies at 5-27; it reads NACTECGFTTTVFSEFQGHIEKH. The disordered stretch occupies residues 25–75; sequence EKHENEHSRSSSGEMSNSQTIEWGDGIQSSTPSPRSTPPSDPTPSPDSDEH. Residues 34–45 show a composition bias toward polar residues; sequence SSSGEMSNSQTI. Residues 59-69 show a composition bias toward pro residues; the sequence is RSTPPSDPTPS. 5 consecutive C2H2-type zinc fingers follow at residues 103-125, 133-155, 161-183, 190-215, and 223-246; these read HVCPHCNFTTCMSQHMKSHLEAH, YQCDICKMQFSQKANMHRHRMRH, YECRFCKKRFFRKDQMQEHSMTH, FDCPVSQCNMQFSQHNALRAHLEETH, and ASCKRCNLMFANSRRLLLHFQTRH. Disordered regions lie at residues 243 to 275, 290 to 311, and 376 to 417; these read QTRHDDSESSPKKENTPKRKKLSNGNALPMDPA, EFSPPNTDTSDNSTSSEFDKIP, and TSSS…KEDE. The segment covering 244–259 has biased composition (basic and acidic residues); the sequence is TRHDDSESSPKKENTP. Composition is skewed to low complexity over residues 292–305 and 376–403; these read SPPNTDTSDNSTSS and TSSSVSVSAPSPSEQSHSPPANESSLSL. The segment covering 404–413 has biased composition (basic and acidic residues); it reads TEKEKSPTPE. C2H2-type zinc fingers lie at residues 420–442 and 448–472; these read VECCHCGMMFYDNTMYLLHKSLH and FKCALCGTQCGEKYMFTTHVIFADH.

This sequence belongs to the Ikaros C2H2-type zinc-finger protein family. In terms of tissue distribution, expressed in the somatic gonad, hypodermis and cells in the head and tail. Expressed in amphid and phasmid sheath glia, amphid and phasmid socket glia, and in neurons in the head.

Its subcellular location is the nucleus. In terms of biological role, positively regulates the expression of ver-1 in the amphid sheath glia of amphid sensory neurons. Together with ehn-3, plays a role in somatic gonad development and is required for proper gonadal primordium assembly and somatic gonad precursor cell morphology. This is Zinc finger protein ztf-16 from Caenorhabditis elegans.